The following is a 344-amino-acid chain: ATPase GET3 (344 aa).

26-33 (KGGVGKTT) contributes to the ATP binding site. Aspartate 57 is a catalytic residue. 2 residues coordinate ATP: glutamate 239 and asparagine 266. Zn(2+)-binding residues include cysteine 276 and cysteine 279.

It belongs to the arsA ATPase family. As to quaternary structure, homodimer. Component of the Golgi to ER traffic (GET) complex, which is composed of GET1, GET2 and GET3. Within the complex, GET1 and GET2 form a heterotetramer which is stabilized by phosphatidylinositol binding and which binds to the GET3 homodimer. Interacts with the chloride channel protein GEF1.

It localises to the cytoplasm. Its subcellular location is the endoplasmic reticulum. It is found in the golgi apparatus. Functionally, ATPase required for the post-translational delivery of tail-anchored (TA) proteins to the endoplasmic reticulum. Recognizes and selectively binds the transmembrane domain of TA proteins in the cytosol. This complex then targets to the endoplasmic reticulum by membrane-bound receptors GET1 and GET2, where the tail-anchored protein is released for insertion. This process is regulated by ATP binding and hydrolysis. ATP binding drives the homodimer towards the closed dimer state, facilitating recognition of newly synthesized TA membrane proteins. ATP hydrolysis is required for insertion. Subsequently, the homodimer reverts towards the open dimer state, lowering its affinity for the GET1-GET2 receptor, and returning it to the cytosol to initiate a new round of targeting. Cooperates with the HDEL receptor ERD2 to mediate the ATP-dependent retrieval of resident ER proteins that contain a C-terminal H-D-E-L retention signal from the Golgi to the ER. Involved in low-level resistance to the oxyanions arsenite and arsenate, and in heat tolerance. In Komagataella phaffii (strain GS115 / ATCC 20864) (Yeast), this protein is ATPase GET3.